We begin with the raw amino-acid sequence, 515 residues long: 2-isopropylmalate synthase (515 aa).

A Pyruvate carboxyltransferase domain is found at 5–267 (VIIFDTTLRD…RTGINHEEIH (263 aa)). 4 residues coordinate Mn(2+): Asp-14, His-202, His-204, and Asn-238. A regulatory domain region spans residues 392–515 (KLNYLSVQSG…EMKQKKIATV (124 aa)).

Belongs to the alpha-IPM synthase/homocitrate synthase family. LeuA type 1 subfamily. In terms of assembly, homodimer. The cofactor is Mn(2+).

It localises to the cytoplasm. It carries out the reaction 3-methyl-2-oxobutanoate + acetyl-CoA + H2O = (2S)-2-isopropylmalate + CoA + H(+). It functions in the pathway amino-acid biosynthesis; L-leucine biosynthesis; L-leucine from 3-methyl-2-oxobutanoate: step 1/4. Its function is as follows. Catalyzes the condensation of the acetyl group of acetyl-CoA with 3-methyl-2-oxobutanoate (2-ketoisovalerate) to form 3-carboxy-3-hydroxy-4-methylpentanoate (2-isopropylmalate). This is 2-isopropylmalate synthase from Vibrio vulnificus (strain CMCP6).